The chain runs to 507 residues: Congo red hypersensitive protein 1 (507 aa).

The first 22 residues, M1–A22, serve as a signal peptide directing secretion. Residues A34–G260 form the GH16 domain. The cysteines at positions 40 and 48 are disulfide-linked. N117 is a glycosylation site (N-linked (GlcNAc...) asparagine). Residue E134 is the Nucleophile of the active site. The active-site Proton donor is E138. E138 provides a ligand contact to chitin. N-linked (GlcNAc...) asparagine glycosylation is found at N177 and N201. Residues W219 and T230 each coordinate chitin. 2 disordered regions span residues S329–T368 and S381–V478. 2 stretches are compositionally biased toward low complexity: residues S381–D439 and T451–S477. N482 is lipidated: GPI-anchor amidated asparagine. The propeptide at G483–L507 is removed in mature form.

The protein belongs to the glycosyl hydrolase 16 family. CRH1 subfamily. The GPI-anchor is attached to the protein in the endoplasmic reticulum and serves to target the protein to the cell surface. There, the glucosamine-inositol phospholipid moiety is cleaved off and the GPI-modified mannoprotein is covalently attached via its lipidless GPI glycan remnant to the 1,6-beta-glucan of the outer cell wall layer.

It localises to the secreted. The protein resides in the cell wall. It is found in the membrane. The enzyme catalyses Random endo-hydrolysis of N-acetyl-beta-D-glucosaminide (1-&gt;4)-beta-linkages in chitin and chitodextrins.. Dual chitinase/transglycosylase that plays a role in cell wall architecture. Chitinase and transglycosylase activities are coupled. Required for the polysaccharide cross-linking at the septa and the cell wall. More specifically, transfers chitin to both beta(1-3)- and beta(1-6)glucan in the cell wall. The minimal number of intact hexopyranose units required in the molecule of the acceptor oligosaccharide is two and the effectivity of the acceptor increased with the increasing length of its oligosaccharide chain. This Saccharomyces cerevisiae (strain ATCC 204508 / S288c) (Baker's yeast) protein is Congo red hypersensitive protein 1.